The chain runs to 175 residues: Nucleoside-triphosphatase THEP1 (175 aa).

Residues 8 to 15 (GSPGVGKS) and 99 to 106 (LVVIDEIG) contribute to the ATP site.

This sequence belongs to the THEP1 NTPase family.

It catalyses the reaction a ribonucleoside 5'-triphosphate + H2O = a ribonucleoside 5'-diphosphate + phosphate + H(+). Its function is as follows. Has nucleotide phosphatase activity towards ATP, GTP, CTP, TTP and UTP. May hydrolyze nucleoside diphosphates with lower efficiency. The sequence is that of Nucleoside-triphosphatase THEP1 from Methanosarcina acetivorans (strain ATCC 35395 / DSM 2834 / JCM 12185 / C2A).